The chain runs to 471 residues: ATP synthase subunit beta (471 aa).

ATP is bound at residue 158 to 165; it reads GGAGCGKT.

The protein belongs to the ATPase alpha/beta chains family. F-type ATPases have 2 components, CF(1) - the catalytic core - and CF(0) - the membrane proton channel. CF(1) has five subunits: alpha(3), beta(3), gamma(1), delta(1), epsilon(1). CF(0) has three main subunits: a(1), b(2) and c(9-12). The alpha and beta chains form an alternating ring which encloses part of the gamma chain. CF(1) is attached to CF(0) by a central stalk formed by the gamma and epsilon chains, while a peripheral stalk is formed by the delta and b chains.

Its subcellular location is the cell inner membrane. It carries out the reaction ATP + H2O + 4 H(+)(in) = ADP + phosphate + 5 H(+)(out). Produces ATP from ADP in the presence of a proton gradient across the membrane. The catalytic sites are hosted primarily by the beta subunits. The chain is ATP synthase subunit beta from Desulfotalea psychrophila (strain LSv54 / DSM 12343).